The following is a 490-amino-acid chain: Aspartyl/glutamyl-tRNA(Asn/Gln) amidotransferase subunit B (490 aa).

Belongs to the GatB/GatE family. GatB subfamily. Heterotrimer of A, B and C subunits.

It catalyses the reaction L-glutamyl-tRNA(Gln) + L-glutamine + ATP + H2O = L-glutaminyl-tRNA(Gln) + L-glutamate + ADP + phosphate + H(+). The catalysed reaction is L-aspartyl-tRNA(Asn) + L-glutamine + ATP + H2O = L-asparaginyl-tRNA(Asn) + L-glutamate + ADP + phosphate + 2 H(+). In terms of biological role, allows the formation of correctly charged Asn-tRNA(Asn) or Gln-tRNA(Gln) through the transamidation of misacylated Asp-tRNA(Asn) or Glu-tRNA(Gln) in organisms which lack either or both of asparaginyl-tRNA or glutaminyl-tRNA synthetases. The reaction takes place in the presence of glutamine and ATP through an activated phospho-Asp-tRNA(Asn) or phospho-Glu-tRNA(Gln). The chain is Aspartyl/glutamyl-tRNA(Asn/Gln) amidotransferase subunit B from Synechococcus sp. (strain JA-3-3Ab) (Cyanobacteria bacterium Yellowstone A-Prime).